Reading from the N-terminus, the 594-residue chain is MKTKDNEVINSESEFSEKDVPNFIEIKKINKTYPDGYVAVKNINFEIKKGEFVTILGPSGCGKTTILKMIGGFELPTSGKILVNKIDIKDLPIQRRPTATVFQDYALFPNMNVEKNIAYGLTEIRKPIENVSADYQKESEKYFNDCLKKSKSKIKDIERKRDGFLKDIQKLENKINNSKILSEVNTMTEEEYEEKIETLEKEYFEKNKKELHKSIPVKVKFIEFINNTLSFFRINKNIDFKANETDELVQTYLKYEKAYRVNLITKQEIDYLNHKAADLDYWVSYWQNYPYQEKEWFDKKKLTRKLTKQEIKEEVQQIIKIIGLEGKEKKWPSDLSGGMQQRVALARALVIKPETLLLDEPLSALDAKVRAQMQQELKNLHKKFGITFILVTHDQEEALTLSDKIIVMSQGKIQQIGTPNEIYDLPANNWVANFIGKANILNATYLKGNKIKLFDNVLNADSRYKDKFKENEEVNVMIRPEDFDVVGKDKGKIKVTVLETTYKGLMWELICEFEGVLLTLEAVNKVNLEQEIYLTWDDEDMHIMKKDDENDTYTDESSEFLALTKNAFKKKIKEIKSKKNKNKVNGKKGDKNDN.

Residues 24–435 (IEIKKINKTY…PANNWVANFI (412 aa)) form the ABC transporter domain. An ATP-binding site is contributed by 57 to 64 (GPSGCGKT). The interval 125-304 (RKPIENVSAD…EWFDKKKLTR (180 aa)) is insert.

It belongs to the ABC transporter superfamily. Spermidine/putrescine importer (TC 3.A.1.11.1) family. The complex is composed of two ATP-binding proteins (PotA), two transmembrane proteins (PotB and PotC) and a solute-binding protein (PotD).

It is found in the cell membrane. The catalysed reaction is ATP + H2O + polyamine-[polyamine-binding protein]Side 1 = ADP + phosphate + polyamineSide 2 + [polyamine-binding protein]Side 1.. In terms of biological role, part of the ABC transporter complex PotABCD involved in spermidine/putrescine import. Responsible for energy coupling to the transport system. This chain is Spermidine/putrescine import ATP-binding protein PotA, found in Malacoplasma penetrans (strain HF-2) (Mycoplasma penetrans).